We begin with the raw amino-acid sequence, 31 residues long: Cytochrome b6-f complex subunit 6 (31 aa).

Residues 4-26 (IVSYFGFLLTASTITPALFIGLS) traverse the membrane as a helical segment.

It belongs to the PetL family. The 4 large subunits of the cytochrome b6-f complex are cytochrome b6, subunit IV (17 kDa polypeptide, PetD), cytochrome f and the Rieske protein, while the 4 small subunits are PetG, PetL, PetM and PetN. The complex functions as a dimer.

The protein localises to the plastid. The protein resides in the chloroplast thylakoid membrane. Component of the cytochrome b6-f complex, which mediates electron transfer between photosystem II (PSII) and photosystem I (PSI), cyclic electron flow around PSI, and state transitions. PetL is important for photoautotrophic growth as well as for electron transfer efficiency and stability of the cytochrome b6-f complex. In Nymphaea alba (White water-lily), this protein is Cytochrome b6-f complex subunit 6.